Consider the following 251-residue polypeptide: LexA repressor (251 aa).

Positions 26 to 46 (FDEMKDALGLKSKSGIHRLIK) form a DNA-binding region, H-T-H motif. Active-site for autocatalytic cleavage activity residues include Ser172 and Lys210.

Belongs to the peptidase S24 family. Homodimer.

The catalysed reaction is Hydrolysis of Ala-|-Gly bond in repressor LexA.. Its function is as follows. Represses a number of genes involved in the response to DNA damage (SOS response), including recA and lexA. In the presence of single-stranded DNA, RecA interacts with LexA causing an autocatalytic cleavage which disrupts the DNA-binding part of LexA, leading to derepression of the SOS regulon and eventually DNA repair. In Rhodospirillum rubrum (strain ATCC 11170 / ATH 1.1.1 / DSM 467 / LMG 4362 / NCIMB 8255 / S1), this protein is LexA repressor.